Consider the following 508-residue polypeptide: UTP--glucose-1-phosphate uridylyltransferase (508 aa).

Position 2 is an N-acetylserine (S2). S2 and S13 each carry phosphoserine. Residues 113 to 116 (LNGG), K127, Q190, and G222 contribute to the UTP site. Residue 115–116 (GG) participates in substrate binding. K127 is a Mg(2+) binding site. Residues H223, 251–253 (NID), and N330 contribute to the substrate site. Position 253 (D253) interacts with UTP. D253 is a binding site for Mg(2+). K396 provides a ligand contact to UTP. K396 is an active-site residue. T426 carries the phosphothreonine modification. S434 bears the Phosphoserine mark. K438 bears the N6-acetyllysine mark. S448 and S461 each carry phosphoserine. Positions 457 to 508 (HLTVSGDVTFGKNVSLKGTVIIIANHGDRIDIPPGAVLENKIVSGNLRILDH) are oligomerization. The segment at 502-503 (NL) is critical for end-to-end subunit interaction.

The protein belongs to the UDPGP type 1 family. As to quaternary structure, homooctamer. As to expression, highly expressed in various brain regions. Expressed in amygdala, anterior cingulate cortex, caudate, cerebellar hemisphere, cerebellum, cortex, frontal cortex, hippocampus, hypothalamus, nucleus accumbens, putamen, spinal cord and substantia nigra. Also widely expressed among other tissues, including liver, heart, placenta, lung, kidney, pancreas and skeletal muscle.

It is found in the cytoplasm. The catalysed reaction is alpha-D-glucose 1-phosphate + UTP + H(+) = UDP-alpha-D-glucose + diphosphate. It participates in glycan biosynthesis; glycogen biosynthesis. Functionally, UTP--glucose-1-phosphate uridylyltransferase catalyzing the conversion of glucose-1-phosphate into UDP-glucose, a crucial precursor for the production of glycogen. The chain is UTP--glucose-1-phosphate uridylyltransferase from Homo sapiens (Human).